An 837-amino-acid polypeptide reads, in one-letter code: ABC transporter A family member 8 (837 aa).

The next 7 membrane-spanning stretches (helical) occupy residues Tyr29–Ile49, Val244–Leu264, Leu303–Gly323, Phe326–Phe346, Val356–Asn376, Gly393–Leu413, and Leu455–Ala475. Positions Ile516–Ile750 constitute an ABC transporter domain. Gly553–Ser560 is a binding site for ATP.

Belongs to the ABC transporter superfamily. ABCA family.

The protein resides in the membrane. In Dictyostelium discoideum (Social amoeba), this protein is ABC transporter A family member 8 (abcA8).